Reading from the N-terminus, the 353-residue chain is T-complex protein 1 subunit eta (353 aa).

Belongs to the TCP-1 chaperonin family. In terms of assembly, heterooligomeric complex of about 850 to 900 kDa that forms two stacked rings, 12 to 16 nm in diameter.

The protein localises to the cytoplasm. Functionally, molecular chaperone; assists the folding of proteins upon ATP hydrolysis. Known to play a role, in vitro, in the folding of actin and tubulin. The protein is T-complex protein 1 subunit eta of Tetrahymena thermophila.